The chain runs to 252 residues: MTFLEEILAQKVIEVAEMPLEKVKDKRETYSFYDFLKAHPEKMQLIAEVKRASPSKGEINMGVDPVTQAKSYEAAGAGMISVLTDPVFFKGSIEDLREVARNVKIPVICKDFIISEKQLIRARNAGATVVLLIISALSEAALKTLFEQATALDLEVLVEVHDQKELAIAQKLGAKLIGVNNRNLHTFEVDIAVSEKLARDFSTNVCFISESGFKTAEDVGRVSKEYNAVLVGEALMREKSPEVAAKRLKVKR.

The protein belongs to the TrpC family.

The enzyme catalyses 1-(2-carboxyphenylamino)-1-deoxy-D-ribulose 5-phosphate + H(+) = (1S,2R)-1-C-(indol-3-yl)glycerol 3-phosphate + CO2 + H2O. It participates in amino-acid biosynthesis; L-tryptophan biosynthesis; L-tryptophan from chorismate: step 4/5. The chain is Indole-3-glycerol phosphate synthase from Listeria welshimeri serovar 6b (strain ATCC 35897 / DSM 20650 / CCUG 15529 / CIP 8149 / NCTC 11857 / SLCC 5334 / V8).